The sequence spans 311 residues: Aspartate carbamoyltransferase catalytic subunit (311 aa).

Arginine 55 and threonine 56 together coordinate carbamoyl phosphate. Lysine 85 provides a ligand contact to L-aspartate. Residues arginine 106, histidine 135, and glutamine 138 each coordinate carbamoyl phosphate. Arginine 168 and arginine 230 together coordinate L-aspartate. Positions 268 and 269 each coordinate carbamoyl phosphate.

Belongs to the aspartate/ornithine carbamoyltransferase superfamily. ATCase family. As to quaternary structure, heterododecamer (2C3:3R2) of six catalytic PyrB chains organized as two trimers (C3), and six regulatory PyrI chains organized as three dimers (R2).

It catalyses the reaction carbamoyl phosphate + L-aspartate = N-carbamoyl-L-aspartate + phosphate + H(+). It participates in pyrimidine metabolism; UMP biosynthesis via de novo pathway; (S)-dihydroorotate from bicarbonate: step 2/3. In terms of biological role, catalyzes the condensation of carbamoyl phosphate and aspartate to form carbamoyl aspartate and inorganic phosphate, the committed step in the de novo pyrimidine nucleotide biosynthesis pathway. The polypeptide is Aspartate carbamoyltransferase catalytic subunit (Escherichia coli O139:H28 (strain E24377A / ETEC)).